The primary structure comprises 769 residues: Scarecrow-like protein 14 (769 aa).

Disordered regions lie at residues 1-23 (MGSY…DFDL), 128-157 (PSSS…GAFS), 279-320 (TEKK…ERSN), and 364-388 (TAQS…DSKK). A GRAS domain is found at 384-765 (NDSKKETADL…RIVYASSLWV (382 aa)). The tract at residues 391–451 (ADLRTLLVLC…EARLAGTGTQ (61 aa)) is leucine repeat I (LRI). A VHIID region spans residues 470–536 (YQTYMSVCPF…GGSPKLRITG (67 aa)). The VHIID signature appears at 501 to 505 (IHIID). The interval 552-584 (ETGHRLARYCQRHNVPFEYNAIAQKWETIQVED) is leucine repeat II (LRII). The interval 593 to 687 (VVVNSLFRFR…KEFYGREIVN (95 aa)) is PFYRE. The SAW stretch occupies residues 690-765 (ACEGTERVER…RIVYASSLWV (76 aa)).

It belongs to the GRAS family. In terms of tissue distribution, expressed in roots, shoots, flowers and siliques.

The protein localises to the nucleus. Probable transcription factor involved in plant development. This chain is Scarecrow-like protein 14 (SCL14), found in Arabidopsis thaliana (Mouse-ear cress).